The primary structure comprises 367 residues: MQTLQVDLGERSYPIHIGERLIDRSDLFASKIRGRQVAIVTNETVAPLYLDRLTSTLSGYSVTPIILPDGESHKNWETLQLIFDALLGARHDRNTTVVALGGGVIGDMAGFAAASYQRGVDFIQVPTTLLSQVDSSVGGKTGINHPLGKNMIGAFYQPRAVVIDTATLATLPSRELSAGLAEVIKYGLICDEPFLTWLEANIDRIRSLDSLALTEAIHRSCAAKAKVVNADERESGVRATLNLGHTFGHAIETHMGYGVWLHGEAVSAGTVMALEMSSQLGWIGQADRDRAIRLLQRAGLPVVPPAEMQPQDFLEHMAVDKKVLDGRLRLVLLRQMGEAVVTGDFPRGVLETTLSADYGAMTEHLGA.

Residues 69–74 (DGESHK), 103–107 (GVIGD), 127–128 (TT), K140, K149, and 167–170 (TLAT) each bind NAD(+). Residues E182, H245, and H262 each coordinate Zn(2+).

Belongs to the sugar phosphate cyclases superfamily. Dehydroquinate synthase family. Co(2+) serves as cofactor. It depends on Zn(2+) as a cofactor. Requires NAD(+) as cofactor.

The protein resides in the cytoplasm. The catalysed reaction is 7-phospho-2-dehydro-3-deoxy-D-arabino-heptonate = 3-dehydroquinate + phosphate. It participates in metabolic intermediate biosynthesis; chorismate biosynthesis; chorismate from D-erythrose 4-phosphate and phosphoenolpyruvate: step 2/7. Its function is as follows. Catalyzes the conversion of 3-deoxy-D-arabino-heptulosonate 7-phosphate (DAHP) to dehydroquinate (DHQ). The polypeptide is 3-dehydroquinate synthase (Stutzerimonas stutzeri (strain A1501) (Pseudomonas stutzeri)).